The primary structure comprises 74 residues: Cytochrome c oxidase subunit 3 (74 aa).

Helical transmembrane passes span 15–37 (SPWP…KWFH) and 42–59 (SLFL…YQWW).

The protein belongs to the cytochrome c oxidase subunit 3 family. In terms of assembly, component of the cytochrome c oxidase (complex IV, CIV), a multisubunit enzyme composed of a catalytic core of 3 subunits and several supernumerary subunits. The complex exists as a monomer or a dimer and forms supercomplexes (SCs) in the inner mitochondrial membrane with ubiquinol-cytochrome c oxidoreductase (cytochrome b-c1 complex, complex III, CIII).

The protein localises to the mitochondrion inner membrane. The catalysed reaction is 4 Fe(II)-[cytochrome c] + O2 + 8 H(+)(in) = 4 Fe(III)-[cytochrome c] + 2 H2O + 4 H(+)(out). Component of the cytochrome c oxidase, the last enzyme in the mitochondrial electron transport chain which drives oxidative phosphorylation. The respiratory chain contains 3 multisubunit complexes succinate dehydrogenase (complex II, CII), ubiquinol-cytochrome c oxidoreductase (cytochrome b-c1 complex, complex III, CIII) and cytochrome c oxidase (complex IV, CIV), that cooperate to transfer electrons derived from NADH and succinate to molecular oxygen, creating an electrochemical gradient over the inner membrane that drives transmembrane transport and the ATP synthase. Cytochrome c oxidase is the component of the respiratory chain that catalyzes the reduction of oxygen to water. Electrons originating from reduced cytochrome c in the intermembrane space (IMS) are transferred via the dinuclear copper A center (CU(A)) of subunit 2 and heme A of subunit 1 to the active site in subunit 1, a binuclear center (BNC) formed by heme A3 and copper B (CU(B)). The BNC reduces molecular oxygen to 2 water molecules using 4 electrons from cytochrome c in the IMS and 4 protons from the mitochondrial matrix. This chain is Cytochrome c oxidase subunit 3 (mt:CoIII), found in Drosophila simulans (Fruit fly).